The chain runs to 509 residues: Histidine ammonia-lyase (509 aa).

A cross-link (5-imidazolinone (Ala-Gly)) is located at residues 142–144 (ASG). Position 143 is a 2,3-didehydroalanine (Ser) (serine 143).

The protein belongs to the PAL/histidase family. Post-translationally, contains an active site 4-methylidene-imidazol-5-one (MIO), which is formed autocatalytically by cyclization and dehydration of residues Ala-Ser-Gly.

The protein localises to the cytoplasm. The catalysed reaction is L-histidine = trans-urocanate + NH4(+). It functions in the pathway amino-acid degradation; L-histidine degradation into L-glutamate; N-formimidoyl-L-glutamate from L-histidine: step 1/3. The sequence is that of Histidine ammonia-lyase from Sphingopyxis alaskensis (strain DSM 13593 / LMG 18877 / RB2256) (Sphingomonas alaskensis).